The following is a 990-amino-acid chain: Aconitate hydratase 3, mitochondrial (990 aa).

A mitochondrion-targeting transit peptide spans 1-78; that stretch reads MYLTASSSAS…PFRFTSQIRA (78 aa). Ser-91 carries the post-translational modification Phosphoserine. Substrate contacts are provided by residues Gln-182 and 301 to 303; that span reads DSH. Residues Cys-533, Cys-599, and Cys-602 each contribute to the [4Fe-4S] cluster site. Residues Arg-632, Arg-637, Arg-795, and 876–877 contribute to the substrate site; that span reads SR.

The protein belongs to the aconitase/IPM isomerase family. As to quaternary structure, monomer. Interacts with B'GAMMA in the cytosol. [4Fe-4S] cluster serves as cofactor. Post-translationally, phosphorylated at Ser-91 in the cytoplasm; this phosphorylation requires the presence of B'GAMMA. In terms of tissue distribution, major aconitase isoenzyme in young seedlings. Expressed in roots, leaves, stems and flowers, and, at low levels, in seeds.

The protein localises to the mitochondrion. It is found in the cytoplasm. It carries out the reaction citrate = D-threo-isocitrate. It functions in the pathway carbohydrate metabolism; tricarboxylic acid cycle; isocitrate from oxaloacetate: step 2/2. Its function is as follows. Catalyzes the isomerization of citrate to isocitrate via cis-aconitate. Contributes to oxidative stress tolerance. Modulates cytosolic citrate metabolism during lipid mobilization. Required during seedling growth. In Arabidopsis thaliana (Mouse-ear cress), this protein is Aconitate hydratase 3, mitochondrial.